Reading from the N-terminus, the 337-residue chain is GTP 3',8-cyclase (337 aa).

A Radical SAM core domain is found at 1 to 226 (MNRVDYLRIS…REKIRQKWGL (226 aa)). R8 contacts GTP. [4Fe-4S] cluster is bound by residues C15 and C19. Residue Y21 coordinates S-adenosyl-L-methionine. Residue C22 coordinates [4Fe-4S] cluster. R60 provides a ligand contact to GTP. G64 is a binding site for S-adenosyl-L-methionine. T91 serves as a coordination point for GTP. Position 115 (S115) interacts with S-adenosyl-L-methionine. Residue K155 coordinates GTP. M189 lines the S-adenosyl-L-methionine pocket. Residues C260 and C263 each coordinate [4Fe-4S] cluster. Residue 265-267 (RMR) coordinates GTP. C277 lines the [4Fe-4S] cluster pocket.

This sequence belongs to the radical SAM superfamily. MoaA family. As to quaternary structure, monomer and homodimer. [4Fe-4S] cluster is required as a cofactor.

The enzyme catalyses GTP + AH2 + S-adenosyl-L-methionine = (8S)-3',8-cyclo-7,8-dihydroguanosine 5'-triphosphate + 5'-deoxyadenosine + L-methionine + A + H(+). Its pathway is cofactor biosynthesis; molybdopterin biosynthesis. Catalyzes the cyclization of GTP to (8S)-3',8-cyclo-7,8-dihydroguanosine 5'-triphosphate. The protein is GTP 3',8-cyclase of Crocosphaera subtropica (strain ATCC 51142 / BH68) (Cyanothece sp. (strain ATCC 51142)).